The sequence spans 379 residues: Lipoyl synthase 2, mitochondrial (379 aa).

Positions 106, 111, 117, 137, 141, 144, and 352 each coordinate [4Fe-4S] cluster. The Radical SAM core domain occupies 122–341 (EHGTQTATIM…EERGNELGFL (220 aa)).

It belongs to the radical SAM superfamily. Lipoyl synthase family. The cofactor is [4Fe-4S] cluster.

It is found in the mitochondrion. It carries out the reaction [[Fe-S] cluster scaffold protein carrying a second [4Fe-4S](2+) cluster] + N(6)-octanoyl-L-lysyl-[protein] + 2 oxidized [2Fe-2S]-[ferredoxin] + 2 S-adenosyl-L-methionine + 4 H(+) = [[Fe-S] cluster scaffold protein] + N(6)-[(R)-dihydrolipoyl]-L-lysyl-[protein] + 4 Fe(3+) + 2 hydrogen sulfide + 2 5'-deoxyadenosine + 2 L-methionine + 2 reduced [2Fe-2S]-[ferredoxin]. It participates in protein modification; protein lipoylation via endogenous pathway; protein N(6)-(lipoyl)lysine from octanoyl-[acyl-carrier-protein]: step 2/2. Functionally, catalyzes the radical-mediated insertion of two sulfur atoms into the C-6 and C-8 positions of the octanoyl moiety bound to the lipoyl domains of lipoate-dependent enzymes, thereby converting the octanoylated domains into lipoylated derivatives. The polypeptide is Lipoyl synthase 2, mitochondrial (Drosophila yakuba (Fruit fly)).